Consider the following 331-residue polypeptide: tRNA uridine(34) hydroxylase (331 aa).

The 97-residue stretch at 122 to 218 folds into the Rhodanese domain; the sequence is KENRCLVLDV…YGQAVGTGKW (97 aa). Cys178 functions as the Cysteine persulfide intermediate in the catalytic mechanism.

This sequence belongs to the TrhO family.

The enzyme catalyses uridine(34) in tRNA + AH2 + O2 = 5-hydroxyuridine(34) in tRNA + A + H2O. In terms of biological role, catalyzes oxygen-dependent 5-hydroxyuridine (ho5U) modification at position 34 in tRNAs. The polypeptide is tRNA uridine(34) hydroxylase (Chlamydia caviae (strain ATCC VR-813 / DSM 19441 / 03DC25 / GPIC) (Chlamydophila caviae)).